We begin with the raw amino-acid sequence, 1894 residues long: Plexin-A1 (1894 aa).

A signal peptide spans 1–27 (MPLPPLSSRTLLLLLLLLLRGVWIAIS). Positions 28–510 (SPPAGLGPQP…TEKQVTQVPV (483 aa)) constitute a Sema domain. Residues 28–1242 (SPPAGLGPQP…VYSDSLLTLP (1215 aa)) lie on the Extracellular side of the membrane. An N-linked (GlcNAc...) asparagine glycan is attached at Asn75. 10 disulfides stabilise this stretch: Cys93-Cys102, Cys128-Cys136, Cys284-Cys405, Cys300-Cys356, Cys374-Cys393, Cys513-Cys530, Cys519-Cys561, Cys522-Cys539, Cys533-Cys545, and Cys596-Cys615. N-linked (GlcNAc...) asparagine glycosylation is found at Asn658, Asn670, and Asn699. IPT/TIG domains lie at 862–957 (PKIL…FTFV), 959–1043 (PTFY…YNYT), 1046–1145 (PTIL…FLYY), and 1148–1234 (PVLE…LQVY). Asn1041 carries an N-linked (GlcNAc...) asparagine glycan. Residues Asn1185 and Asn1210 are each glycosylated (N-linked (GlcNAc...) asparagine). The helical transmembrane segment at 1243 to 1263 (AIVGIGGGGGLLLLVIVAVLI) threads the bilayer. A coiled-coil region spans residues 1262-1315 (LIAYKRKSRDADRTLKRLQLQMDNLESRVALECKEAFAELQTDIHELTSDLDGA). Residues 1264-1894 (AYKRKSRDAD…QVVDTMALSS (631 aa)) lie on the Cytoplasmic side of the membrane.

It belongs to the plexin family. Interacts directly with NRP1 and NRP2. Interacts with PLXN1B. Interacts with FARP2, RND1 and KDR/VEGFR2. Binding of SEMA3A leads to dissociation of FARP2. Interacts with CRMP1, DPYSL2/CRMP2, DPYSL3/CRMP3 and DPYSL4/CRMP4. Interacts (via TIG domains) with TREM2; the interaction mediates SEMA6D binding and signaling through TYROBP. As to expression, ubiquitous.

It localises to the cell membrane. Functionally, coreceptor for SEMA3A, SEMA3C, SEMA3F and SEMA6D. Necessary for signaling by class 3 semaphorins and subsequent remodeling of the cytoskeleton. Plays a role in axon guidance, invasive growth and cell migration. Class 3 semaphorins bind to a complex composed of a neuropilin and a plexin. The plexin modulates the affinity of the complex for specific semaphorins, and its cytoplasmic domain is required for the activation of down-stream signaling events in the cytoplasm. Acts as coreceptor of TREM2 for SEMA6D in dendritic cells and is involved in the generation of immune responses and skeletal homeostasis. The sequence is that of Plexin-A1 (Plxna1) from Mus musculus (Mouse).